The primary structure comprises 193 residues: 3-isopropylmalate dehydratase small subunit (193 aa).

Belongs to the LeuD family. LeuD type 1 subfamily. As to quaternary structure, heterodimer of LeuC and LeuD.

The catalysed reaction is (2R,3S)-3-isopropylmalate = (2S)-2-isopropylmalate. It functions in the pathway amino-acid biosynthesis; L-leucine biosynthesis; L-leucine from 3-methyl-2-oxobutanoate: step 2/4. Its function is as follows. Catalyzes the isomerization between 2-isopropylmalate and 3-isopropylmalate, via the formation of 2-isopropylmaleate. This chain is 3-isopropylmalate dehydratase small subunit, found in Listeria innocua serovar 6a (strain ATCC BAA-680 / CLIP 11262).